A 120-amino-acid polypeptide reads, in one-letter code: Aspartate 1-decarboxylase (120 aa).

The active-site Schiff-base intermediate with substrate; via pyruvic acid is the Ser-25. Pyruvic acid (Ser) is present on Ser-25. Residue Thr-57 participates in substrate binding. Tyr-58 acts as the Proton donor in catalysis. 73–75 (GAA) serves as a coordination point for substrate.

Belongs to the PanD family. Heterooctamer of four alpha and four beta subunits. The cofactor is pyruvate. Post-translationally, is synthesized initially as an inactive proenzyme, which is activated by self-cleavage at a specific serine bond to produce a beta-subunit with a hydroxyl group at its C-terminus and an alpha-subunit with a pyruvoyl group at its N-terminus.

It is found in the cytoplasm. The enzyme catalyses L-aspartate + H(+) = beta-alanine + CO2. Its pathway is cofactor biosynthesis; (R)-pantothenate biosynthesis; beta-alanine from L-aspartate: step 1/1. Catalyzes the pyruvoyl-dependent decarboxylation of aspartate to produce beta-alanine. The chain is Aspartate 1-decarboxylase from Coprothermobacter proteolyticus (strain ATCC 35245 / DSM 5265 / OCM 4 / BT).